We begin with the raw amino-acid sequence, 1103 residues long: Mediator of RNA polymerase II transcription subunit 14 (1103 aa).

Disordered regions lie at residues 1–63 (MPGV…GYKQ), 120–140 (VPPQDSGPLPGAPNGKPLGNQ), and 1054–1103 (LETK…ITID). The span at 1073-1103 (SGNTVQNARLENKSPQKAAATHSNADVITID) shows a compositional bias: polar residues.

This sequence belongs to the Mediator complex subunit 14 family. As to quaternary structure, component of the Mediator complex.

The protein localises to the nucleus. Its function is as follows. Component of the Mediator complex, a coactivator involved in the regulated transcription of nearly all RNA polymerase II-dependent genes. Mediator functions as a bridge to convey information from gene-specific regulatory proteins to the basal RNA polymerase II transcription machinery. Mediator is recruited to promoters by direct interactions with regulatory proteins and serves as a scaffold for the assembly of a functional preinitiation complex with RNA polymerase II and the general transcription factors. This is Mediator of RNA polymerase II transcription subunit 14 (rgr1) from Aspergillus terreus (strain NIH 2624 / FGSC A1156).